The chain runs to 30 residues: Uperin-6.2 (30 aa).

Expressed by the skin dorsal glands.

It localises to the secreted. The protein is Uperin-6.2 of Uperoleia inundata (Floodplain toadlet).